The primary structure comprises 293 residues: Mimecan (293 aa).

Positions 1–19 (MKTLQATFFLVAFVPLVKP) are cleaved as a signal peptide. Asparagine 60 carries N-linked (GlcNAc...) asparagine glycosylation. 7 LRR repeats span residues 107 to 126 (EAVPPLPKETAYLYARFNKI), 127 to 150 (KRIAVSDFADITTLRRIDFSGNMI), 151 to 174 (EEIEDGAFSKLLLLEELSLAENRL), 175 to 194 (VKLPVLPPKLTTFNANQNRI), 195 to 220 (KSRGIKNNAFKKLTNLAYLYLGHNAL), 221 to 241 (ESVPLNLPESLRILHLQHNNI), and 242 to 272 (TTITDDTFCKSNNTRYIRTRMDEIRMEGNPI). Asparagine 240 and asparagine 253 each carry an N-linked (GlcNAc...) asparagine glycan. The cysteines at positions 250 and 283 are disulfide-linked.

The protein belongs to the small leucine-rich proteoglycan (SLRP) family. SLRP class III subfamily. Post-translationally, contains keratan sulfate. Expressed in many tissues.

Its subcellular location is the secreted. It localises to the extracellular space. The protein resides in the extracellular matrix. Its function is as follows. Induces bone formation in conjunction with TGF-beta-1 or TGF-beta-2. This chain is Mimecan (OGN), found in Coturnix japonica (Japanese quail).